A 785-amino-acid polypeptide reads, in one-letter code: Leucyl aminopeptidase (785 aa).

Residues Glu106 and 238–242 (GAMEN) contribute to the substrate site. His273 provides a ligand contact to Zn(2+). Catalysis depends on Glu274, which acts as the Proton acceptor. Zn(2+)-binding residues include His277 and Glu296.

Belongs to the peptidase M1 family. In terms of assembly, co-immunoprecipitates with the 60 kDa chaperonin. Zn(2+) serves as cofactor. Post-translationally, can be phosphorylated by cell extracts.

Its subcellular location is the cytoplasm. The catalysed reaction is Release of an N-terminal amino acid, Xaa-|-Yaa-, in which Xaa is preferably Leu, but may be other amino acids including Pro although not Arg or Lys, and Yaa may be Pro. Amino acid amides and methyl esters are also readily hydrolyzed, but rates on arylamides are exceedingly low.. Functionally, preferentially acts as a leucyl-aminopeptidase, although it also has activity against other substrates. The sequence is that of Leucyl aminopeptidase (ape2) from Saccharolobus solfataricus (strain ATCC 35092 / DSM 1617 / JCM 11322 / P2) (Sulfolobus solfataricus).